The sequence spans 1293 residues: Receptor-type tyrosine-protein phosphatase C (1293 aa).

The signal sequence occupies residues 1–25; the sequence is MTMGLWLKLLAFGFALLDTEVFVTG. The Extracellular portion of the chain corresponds to 26–566; it reads QTPTPSDELS…RNESTNFNAK (541 aa). Positions 43-174 are disordered; sequence LPQSDPLPAR…STTDISSGAS (132 aa). Polar residues-rich tracts occupy residues 53 to 72, 88 to 110, and 149 to 169; these read TTES…SETT, QPDS…QADN, and LARN…TTDI. The N-linked (GlcNAc...) asparagine glycan is linked to Asn-66. 15 N-linked (GlcNAc...) asparagine glycosylation sites follow: Asn-152, Asn-163, Asn-209, Asn-213, Asn-220, Asn-255, Asn-260, Asn-292, Asn-313, Asn-324, Asn-349, Asn-418, Asn-429, Asn-459, and Asn-491. Fibronectin type-III domains lie at 376–472 and 473–568; these read IPET…TKAD and RPDK…AKAL. Residues 567–588 traverse the membrane as a helical segment; the sequence is ALIIFLVFLIIVTSIALLVVLY. The Cytoplasmic segment spans residues 589 to 1293; sequence KIYDLRKKRS…SASPAPTQSS (705 aa). 2 consecutive Tyrosine-protein phosphatase domains span residues 642–901 and 933–1216; these read FLAE…LVEY and LEAE…IASI. Tyr-672 is modified (phosphotyrosine). Residues Asp-810, 842–848, and Gln-886 each bind substrate; that span reads CSAGVGR. Cys-842 acts as the Phosphocysteine intermediate in catalysis. A phosphoserine mark is found at Ser-964, Ser-983, Ser-986, Ser-990, Ser-993, Ser-994, and Ser-998. The segment at 980 to 1003 is disordered; the sequence is LEMSKESEPESDESSDDDSDSEET. Residues 988-1001 show a composition bias toward acidic residues; it reads PESDESSDDDSDSE. Cys-1157 (phosphocysteine intermediate) is an active-site residue. Residue Ser-1229 is modified to Phosphoserine. Residues 1240–1293 form a disordered region; the sequence is DGGKQDANCVRPDGPLNKAQEDSRGVGTPEPTNSAEEPEHAANGSASPAPTQSS. Thr-1267 bears the Phosphothreonine mark. The span at 1283-1293 shows a compositional bias: polar residues; sequence GSASPAPTQSS. Position 1286 is a phosphoserine (Ser-1286).

The protein belongs to the protein-tyrosine phosphatase family. Receptor class 1/6 subfamily. Interacts with SKAP1. Interacts with DPP4; the interaction is enhanced in an interleukin-12-dependent manner in activated lymphocytes. Binds GANAB and PRKCSH. Interacts with CD53; this interaction stabilizes PTPRC on the membrane and is required for optimal phosphatase activity. Interacts with CLEC10A. In terms of processing, heavily N- and O-glycosylated.

It is found in the cell membrane. It localises to the membrane raft. The protein resides in the synapse. The catalysed reaction is O-phospho-L-tyrosyl-[protein] + H2O = L-tyrosyl-[protein] + phosphate. In terms of biological role, protein tyrosine-protein phosphatase required for T-cell activation through the antigen receptor. Acts as a positive regulator of T-cell coactivation upon binding to DPP4. The first PTPase domain has enzymatic activity, while the second one seems to affect the substrate specificity of the first one. Upon T-cell activation, recruits and dephosphorylates SKAP1 and FYN. Dephosphorylates LYN, and thereby modulates LYN activity. Interacts with CLEC10A at antigen presenting cell-T cell contact; CLEC10A on immature dendritic cells recognizes Tn antigen-carrying PTPRC/CD45 receptor on effector T cells and modulates T cell activation threshold to limit autoreactivity. This Mus musculus (Mouse) protein is Receptor-type tyrosine-protein phosphatase C.